Reading from the N-terminus, the 283-residue chain is Bifunctional protein FolD (283 aa).

Residues 164–166 (GRS), Ser-189, and Thr-230 contribute to the NADP(+) site.

The protein belongs to the tetrahydrofolate dehydrogenase/cyclohydrolase family. In terms of assembly, homodimer.

It carries out the reaction (6R)-5,10-methylene-5,6,7,8-tetrahydrofolate + NADP(+) = (6R)-5,10-methenyltetrahydrofolate + NADPH. The enzyme catalyses (6R)-5,10-methenyltetrahydrofolate + H2O = (6R)-10-formyltetrahydrofolate + H(+). It participates in one-carbon metabolism; tetrahydrofolate interconversion. Catalyzes the oxidation of 5,10-methylenetetrahydrofolate to 5,10-methenyltetrahydrofolate and then the hydrolysis of 5,10-methenyltetrahydrofolate to 10-formyltetrahydrofolate. The chain is Bifunctional protein FolD from Dictyoglomus thermophilum (strain ATCC 35947 / DSM 3960 / H-6-12).